The sequence spans 165 residues: 2-C-methyl-D-erythritol 2,4-cyclodiphosphate synthase (165 aa).

2 residues coordinate a divalent metal cation: Asp11 and His13. 4-CDP-2-C-methyl-D-erythritol 2-phosphate contacts are provided by residues 11–13 (DVH) and 40–41 (HS). Position 48 (His48) interacts with a divalent metal cation. Residues 62–64 (DIG), 67–71 (FPDTD), 137–140 (TTSE), Phe144, and Arg147 contribute to the 4-CDP-2-C-methyl-D-erythritol 2-phosphate site.

It belongs to the IspF family. Homotrimer. Requires a divalent metal cation as cofactor.

The enzyme catalyses 4-CDP-2-C-methyl-D-erythritol 2-phosphate = 2-C-methyl-D-erythritol 2,4-cyclic diphosphate + CMP. Its pathway is isoprenoid biosynthesis; isopentenyl diphosphate biosynthesis via DXP pathway; isopentenyl diphosphate from 1-deoxy-D-xylulose 5-phosphate: step 4/6. In terms of biological role, involved in the biosynthesis of isopentenyl diphosphate (IPP) and dimethylallyl diphosphate (DMAPP), two major building blocks of isoprenoid compounds. Catalyzes the conversion of 4-diphosphocytidyl-2-C-methyl-D-erythritol 2-phosphate (CDP-ME2P) to 2-C-methyl-D-erythritol 2,4-cyclodiphosphate (ME-CPP) with a corresponding release of cytidine 5-monophosphate (CMP). In Rubrobacter xylanophilus (strain DSM 9941 / JCM 11954 / NBRC 16129 / PRD-1), this protein is 2-C-methyl-D-erythritol 2,4-cyclodiphosphate synthase.